The primary structure comprises 306 residues: Methionyl-tRNA formyltransferase (306 aa).

(6S)-5,6,7,8-tetrahydrofolate is bound at residue 105 to 108; sequence SLLP.

This sequence belongs to the Fmt family.

It carries out the reaction L-methionyl-tRNA(fMet) + (6R)-10-formyltetrahydrofolate = N-formyl-L-methionyl-tRNA(fMet) + (6S)-5,6,7,8-tetrahydrofolate + H(+). Its function is as follows. Attaches a formyl group to the free amino group of methionyl-tRNA(fMet). The formyl group appears to play a dual role in the initiator identity of N-formylmethionyl-tRNA by promoting its recognition by IF2 and preventing the misappropriation of this tRNA by the elongation apparatus. This Rubrobacter xylanophilus (strain DSM 9941 / JCM 11954 / NBRC 16129 / PRD-1) protein is Methionyl-tRNA formyltransferase.